Reading from the N-terminus, the 168-residue chain is Photosystem I assembly protein Ycf3 (168 aa).

TPR repeat units follow at residues 35 to 68 (AFTY…EIDP), 72 to 105 (SYIL…NPFL), and 120 to 153 (GEQA…TPGN).

This sequence belongs to the Ycf3 family.

Its subcellular location is the plastid. It is found in the chloroplast thylakoid membrane. Functionally, essential for the assembly of the photosystem I (PSI) complex. May act as a chaperone-like factor to guide the assembly of the PSI subunits. This is Photosystem I assembly protein Ycf3 from Illicium oligandrum (Star anise).